A 58-amino-acid polypeptide reads, in one-letter code: Large ribosomal subunit protein bL32 (58 aa).

Belongs to the bacterial ribosomal protein bL32 family.

The polypeptide is Large ribosomal subunit protein bL32 (Staphylococcus aureus (strain NCTC 8325 / PS 47)).